A 23-amino-acid polypeptide reads, in one-letter code: Basic phospholipase A2 CB1 (23 aa).

In terms of assembly, heterodimer of an acidic subunit and a basic chain. The acidic subunit is non-toxic, without enzymatic activity and comprises 3 peptides that are cross-linked by 7 disulfide bridges. The basic subunit is toxic, has phospholipase A2 activity and is composed of a single chain. The cofactor is Ca(2+). Contains 7 disulfide bonds. As to expression, expressed by the venom gland.

The protein localises to the secreted. It catalyses the reaction a 1,2-diacyl-sn-glycero-3-phosphocholine + H2O = a 1-acyl-sn-glycero-3-phosphocholine + a fatty acid + H(+). In terms of biological role, snake venom phospholipase A2 (PLA2) that shows presynaptic neurotoxicity. PLA2 catalyzes the calcium-dependent hydrolysis of the 2-acyl groups in 3-sn-phosphoglycerides. In Crotalus basiliscus (Mexican west-coast rattlesnake), this protein is Basic phospholipase A2 CB1.